The primary structure comprises 245 residues: Octanoyltransferase (245 aa).

Residues 54-242 form the BPL/LPL catalytic domain; the sequence is QNAHEQVWLL…SFEQIFGPII (189 aa). Substrate is bound by residues 93–100, 173–175, and 186–188; these read RGGEFTYH, AIG, and GVS. The active-site Acyl-thioester intermediate is C204.

The protein belongs to the LipB family.

It localises to the cytoplasm. The catalysed reaction is octanoyl-[ACP] + L-lysyl-[protein] = N(6)-octanoyl-L-lysyl-[protein] + holo-[ACP] + H(+). Its pathway is protein modification; protein lipoylation via endogenous pathway; protein N(6)-(lipoyl)lysine from octanoyl-[acyl-carrier-protein]: step 1/2. Functionally, catalyzes the transfer of endogenously produced octanoic acid from octanoyl-acyl-carrier-protein onto the lipoyl domains of lipoate-dependent enzymes. Lipoyl-ACP can also act as a substrate although octanoyl-ACP is likely to be the physiological substrate. In Bartonella henselae (strain ATCC 49882 / DSM 28221 / CCUG 30454 / Houston 1) (Rochalimaea henselae), this protein is Octanoyltransferase.